Consider the following 313-residue polypeptide: Cytochrome f (313 aa).

A signal peptide spans 1–31 (MQNMFSFLSNKKIIALFLIIGTIFMPLSSEA). Y32, C52, C55, and H56 together coordinate heme. A helical transmembrane segment spans residues 279-298 (IKWLIAFLILSTLGQVFLVL).

The protein belongs to the cytochrome f family. In terms of assembly, the 4 large subunits of the cytochrome b6-f complex are cytochrome b6, subunit IV (17 kDa polypeptide, petD), cytochrome f and the Rieske protein, while the 4 small subunits are PetG, PetL, PetM and PetN. The complex functions as a dimer. Heme is required as a cofactor.

The protein resides in the plastid. It is found in the chloroplast thylakoid membrane. Functionally, component of the cytochrome b6-f complex, which mediates electron transfer between photosystem II (PSII) and photosystem I (PSI), cyclic electron flow around PSI, and state transitions. This chain is Cytochrome f (petA), found in Mesostigma viride (Green alga).